The primary structure comprises 426 residues: Immunoglobulin mu Fc receptor (426 aa).

The N-terminal stretch at 1–16 is a signal peptide; it reads MNLWLWLLYFLPVSGT. Residues 24 to 121 form the Ig-like domain; it reads RLEVELGGSV…GKTQKVTLNV (98 aa). 2 disulfide bridges follow: C37–C103 and C49–C58. T91 is subject to Phosphothreonine. A disordered region spans residues 178–212; that stretch reads KTEAPPVHQPSTNTSVSRHPRVYGASSETPTKPSA. Residues 267–287 form a helical membrane-spanning segment; sequence FHILIPTFLGFLLLVLLGLVV. Disordered regions lie at residues 306–346 and 401–426; these read RRMR…REPD and DSND…PSRQ. Over residues 415–426 the composition is skewed to pro residues; the sequence is PSKPPGPRPSRQ.

In terms of assembly, interacts (via Ig-like domain) with IGHM (via CH4/Cmu4 domain), both secreted and membrane-bound IgM; the interaction is glycan-independent and multivalent theoretically involving up to eight binding sites for the IgM pentamer. Phosphorylated on both Tyr and Ser residues. Post-translationally, O-glycosylated. Sialylated. O-linked glycans regulate trafficking to the plasma membrane.

It localises to the cell membrane. The protein resides in the early endosome membrane. Its subcellular location is the golgi apparatus. The protein localises to the trans-Golgi network membrane. It is found in the lysosome membrane. Its function is as follows. High-affinity Fc receptor for immunoglobulin M (IgM), both secreted and membrane-bound IgM. Primarily regulates IgM transport and homeostasis. In lymphoid cells, enables exocytosis of membrane-bound IgM on the plasma membrane as well as endocytosis of IgM-antigen complexes toward lysosomes for degradation. In mucosal epithelium, mediates retrotranscytosis of antigen-IgM complexes across mucosal M cells toward antigen-presenting cells in mucosal lymphoid tissues. Triggers costimulatory signaling and mediates most of IgM effector functions involved in B cell development and primary immune response to infection. Likely limits tonic IgM BCR signaling to self-antigens for proper negative selection of autoreactive B cells in the bone marrow and for the maintenance of regulatory B cell pool in peripheral lymphoid organs. Mediates antibody responses to T cell-dependent and T cell-independent antigens and promotes induction of an efficient neutralizing IgG response. Engages in cross-talk with antigen-receptor signaling via the non-canonical NF-kappa-B, MAP kinases and calcium signaling pathways. This chain is Immunoglobulin mu Fc receptor, found in Rattus norvegicus (Rat).